The sequence spans 546 residues: MSAKDVKFGVEARDRMLRGVDILANAVKVTLGPKGRNVVLDKSFGAPRITKDGVTVAKEIELDDKFENMGAQMVREVASKSADAAGDGTTTATVLAQAIVREGAKAVAAGMNPMDLKRGIDLAVEAVVADLVKNSKKVTSNDEIAQVGTISANGDSEIGKFLADAMKKVGNEGVITVEEAKSLETELDVVEGMQFDRGYISPYFVTNADKMRVEMDDAYILINEKKLSSLNELLPLLEAVVQTGKPLVIVAEDVEGEALATLVVNRLRGGLKVAAVKAPGFGDRRKAMLQDIAILTGGQAISEDLGIKLENVNLSMLGRAKKVMIDKENTTIVNGAGKKADIEARVAQIKAQIEETTSDYDREKLQERLAKLAGGVAVIRVGGATEVEVKERKDRVDDAMHATRAAVEEGILPGGGVALLRASEQLKGLRTKNEDQKTGVEIVRKALSAPARQIAINAGEDGSVIVGKILEKEQYAYGFDSQTGDYVNMVSKGIIDPTKVVRTAIQNAASVASLLITTEAMVAELPKKNAGGPAMPPGGGMGGMDF.

Residues 30-33, Lys-51, 87-91, Gly-415, and Asp-496 each bind ATP; these read TLGP and DGTTT.

It belongs to the chaperonin (HSP60) family. Forms a cylinder of 14 subunits composed of two heptameric rings stacked back-to-back. Interacts with the co-chaperonin GroES.

It is found in the cytoplasm. It catalyses the reaction ATP + H2O + a folded polypeptide = ADP + phosphate + an unfolded polypeptide.. In terms of biological role, together with its co-chaperonin GroES, plays an essential role in assisting protein folding. The GroEL-GroES system forms a nano-cage that allows encapsulation of the non-native substrate proteins and provides a physical environment optimized to promote and accelerate protein folding. The protein is Chaperonin GroEL 4 of Bradyrhizobium sp. (strain BTAi1 / ATCC BAA-1182).